Reading from the N-terminus, the 164-residue chain is Transcription factor E (164 aa).

An HTH TFE/IIEalpha-type domain is found at N5–E87.

It belongs to the TFE family. Monomer. Interaction with RNA polymerase subunits RpoF and RpoE is necessary for Tfe stimulatory transcription activity. Able to interact with Tbp and RNA polymerase in the absence of DNA promoter. Interacts both with the preinitiation and elongation complexes.

Transcription factor that plays a role in the activation of archaeal genes transcribed by RNA polymerase. Facilitates transcription initiation by enhancing TATA-box recognition by TATA-box-binding protein (Tbp), and transcription factor B (Tfb) and RNA polymerase recruitment. Not absolutely required for transcription in vitro, but particularly important in cases where Tbp or Tfb function is not optimal. It dynamically alters the nucleic acid-binding properties of RNA polymerases by stabilizing the initiation complex and destabilizing elongation complexes. Seems to translocate with the RNA polymerase following initiation and acts by binding to the non template strand of the transcription bubble in elongation complexes. The polypeptide is Transcription factor E (Methanosarcina barkeri (strain Fusaro / DSM 804)).